The primary structure comprises 476 residues: Protein DETOXIFICATION 1 (476 aa).

The next 12 membrane-spanning stretches (helical) occupy residues 35-55, 66-86, 117-137, 146-166, 184-204, 208-228, 260-280, 289-309, 331-351, 370-390, 402-422, and 433-453; these read AAPM…SVMV, GVAL…CGLV, IPIC…LISL, IAGS…IVIP, AVTT…LFGL, GPAM…SCYV, AAMI…SGLL, VLSI…GVAA, VLAG…LLFT, VADL…TAVL, IGAW…GIYL, and LWCG…IVTA.

It belongs to the multi antimicrobial extrusion (MATE) (TC 2.A.66.1) family. As to expression, ubiquitous. Highest expression in flowers and stems.

It localises to the cell membrane. Its function is as follows. Efflux carrier for plant-derived alkaloids, antibiotics, heavy metal and other toxic compounds. Involved in cadmium detoxification. Requires probably a proton-motive force for the efflux. The chain is Protein DETOXIFICATION 1 from Arabidopsis thaliana (Mouse-ear cress).